The sequence spans 260 residues: ATP synthase subunit a (260 aa).

Transmembrane regions (helical) follow at residues 27-47 (FWTVNIDSMIFSVLLGALFIW), 90-110 (IAPLGLTVFVWIFLMNLMDLI), 132-154 (SADVNITMSMALGVFFLILYYSI), 208-228 (LIFILIAGLLPWWSQWILSVP), and 230-250 (AIFHILIITLQAFIFMVLTIV).

The protein belongs to the ATPase A chain family. F-type ATPases have 2 components, CF(1) - the catalytic core - and CF(0) - the membrane proton channel. CF(1) has five subunits: alpha(3), beta(3), gamma(1), delta(1), epsilon(1). CF(0) has three main subunits: a(1), b(2) and c(9-12). The alpha and beta chains form an alternating ring which encloses part of the gamma chain. CF(1) is attached to CF(0) by a central stalk formed by the gamma and epsilon chains, while a peripheral stalk is formed by the delta and b chains.

Its subcellular location is the cell inner membrane. Key component of the proton channel; it plays a direct role in the translocation of protons across the membrane. This is ATP synthase subunit a from Aeromonas hydrophila subsp. hydrophila (strain ATCC 7966 / DSM 30187 / BCRC 13018 / CCUG 14551 / JCM 1027 / KCTC 2358 / NCIMB 9240 / NCTC 8049).